The chain runs to 442 residues: tRNA-2-methylthio-N(6)-dimethylallyladenosine synthase (442 aa).

One can recognise an MTTase N-terminal domain in the interval 5–122 (KKVFIKTLGC…LPEMIKQKQK (118 aa)). 6 residues coordinate [4Fe-4S] cluster: Cys-14, Cys-51, Cys-85, Cys-159, Cys-163, and Cys-166. Residues 145-378 (KAEGAKAYVS…DLLNSNAQII (234 aa)) enclose the Radical SAM core domain. A TRAM domain is found at 380–442 (RQMVGTNQRI…LPNSLRGELI (63 aa)).

This sequence belongs to the methylthiotransferase family. MiaB subfamily. In terms of assembly, monomer. The cofactor is [4Fe-4S] cluster.

The protein localises to the cytoplasm. It carries out the reaction N(6)-dimethylallyladenosine(37) in tRNA + (sulfur carrier)-SH + AH2 + 2 S-adenosyl-L-methionine = 2-methylsulfanyl-N(6)-dimethylallyladenosine(37) in tRNA + (sulfur carrier)-H + 5'-deoxyadenosine + L-methionine + A + S-adenosyl-L-homocysteine + 2 H(+). In terms of biological role, catalyzes the methylthiolation of N6-(dimethylallyl)adenosine (i(6)A), leading to the formation of 2-methylthio-N6-(dimethylallyl)adenosine (ms(2)i(6)A) at position 37 in tRNAs that read codons beginning with uridine. The polypeptide is tRNA-2-methylthio-N(6)-dimethylallyladenosine synthase (Francisella tularensis subsp. holarctica (strain FTNF002-00 / FTA)).